A 550-amino-acid polypeptide reads, in one-letter code: Hydroxylamine reductase (550 aa).

[2Fe-2S] cluster is bound by residues cysteine 4, cysteine 7, cysteine 19, and cysteine 26. Hybrid [4Fe-2O-2S] cluster contacts are provided by histidine 249, glutamate 273, cysteine 317, cysteine 405, cysteine 433, cysteine 458, glutamate 492, and lysine 494. Cysteine persulfide is present on cysteine 405.

It belongs to the HCP family. It depends on [2Fe-2S] cluster as a cofactor. Hybrid [4Fe-2O-2S] cluster is required as a cofactor.

It localises to the cytoplasm. It catalyses the reaction A + NH4(+) + H2O = hydroxylamine + AH2 + H(+). Functionally, catalyzes the reduction of hydroxylamine to form NH(3) and H(2)O. The chain is Hydroxylamine reductase from Aeromonas salmonicida (strain A449).